The primary structure comprises 528 residues: DEAD-box ATP-dependent RNA helicase CshA (528 aa).

The Q motif motif lies at 2 to 30 (TTFRELGLSDSLLQSVESMGFEEATPIQA). One can recognise a Helicase ATP-binding domain in the interval 33-203 (IPHALQGKDI…ERFMTEPQHI (171 aa)). An ATP-binding site is contributed by 46-53 (AQTGTGKT). Residues 151–154 (DEAD) carry the DEAD box motif. The 161-residue stretch at 214-374 (NIQQFYLEVQ…RMDAPTLDEA (161 aa)) folds into the Helicase C-terminal domain. The interval 428–528 (TTPIALTSEP…RKHHSRKPQA (101 aa)) is disordered. The segment covering 458–506 (DGNRNRSRDGRGGDGRNRDRNRDGRNRDGNRDRNREGSRDGNRGRRGEG) has biased composition (basic and acidic residues). A compositionally biased stretch (basic residues) spans 518–528 (ERKHHSRKPQA).

This sequence belongs to the DEAD box helicase family. CshA subfamily. Oligomerizes, may be a member of the RNA degradosome.

The protein resides in the cytoplasm. The enzyme catalyses ATP + H2O = ADP + phosphate + H(+). Functionally, DEAD-box RNA helicase possibly involved in RNA degradation. Unwinds dsRNA in both 5'- and 3'-directions, has RNA-dependent ATPase activity. This is DEAD-box ATP-dependent RNA helicase CshA from Bacillus thuringiensis (strain Al Hakam).